We begin with the raw amino-acid sequence, 125 residues long: S-adenosylmethionine decarboxylase proenzyme (125 aa).

The active-site Schiff-base intermediate with substrate; via pyruvic acid is the serine 63. Serine 63 carries the pyruvic acid (Ser); by autocatalysis modification. Catalysis depends on histidine 68, which acts as the Proton acceptor; for processing activity. The active-site Proton donor; for catalytic activity is cysteine 83.

The protein belongs to the prokaryotic AdoMetDC family. Type 1 subfamily. In terms of assembly, heterotetramer of two alpha and two beta chains arranged as a dimer of alpha/beta heterodimers. The cofactor is pyruvate. Post-translationally, is synthesized initially as an inactive proenzyme. Formation of the active enzyme involves a self-maturation process in which the active site pyruvoyl group is generated from an internal serine residue via an autocatalytic post-translational modification. Two non-identical subunits are generated from the proenzyme in this reaction, and the pyruvate is formed at the N-terminus of the alpha chain, which is derived from the carboxyl end of the proenzyme. The post-translation cleavage follows an unusual pathway, termed non-hydrolytic serinolysis, in which the side chain hydroxyl group of the serine supplies its oxygen atom to form the C-terminus of the beta chain, while the remainder of the serine residue undergoes an oxidative deamination to produce ammonia and the pyruvoyl group blocking the N-terminus of the alpha chain.

It carries out the reaction S-adenosyl-L-methionine + H(+) = S-adenosyl 3-(methylsulfanyl)propylamine + CO2. It functions in the pathway amine and polyamine biosynthesis; S-adenosylmethioninamine biosynthesis; S-adenosylmethioninamine from S-adenosyl-L-methionine: step 1/1. Its function is as follows. Catalyzes the decarboxylation of S-adenosylmethionine to S-adenosylmethioninamine (dcAdoMet), the propylamine donor required for the synthesis of the polyamines spermine and spermidine from the diamine putrescine. The polypeptide is S-adenosylmethionine decarboxylase proenzyme (Moorella thermoacetica (strain ATCC 39073 / JCM 9320)).